The following is a 73-amino-acid chain: Translation initiation factor IF-1 (73 aa).

In terms of domain architecture, S1-like spans 1–73 (MAKKEDTLVL…TKARVVYRHR (73 aa)).

It belongs to the IF-1 family. Component of the 30S ribosomal translation pre-initiation complex which assembles on the 30S ribosome in the order IF-2 and IF-3, IF-1 and N-formylmethionyl-tRNA(fMet); mRNA recruitment can occur at any time during PIC assembly.

It is found in the cytoplasm. Its function is as follows. One of the essential components for the initiation of protein synthesis. Stabilizes the binding of IF-2 and IF-3 on the 30S subunit to which N-formylmethionyl-tRNA(fMet) subsequently binds. Helps modulate mRNA selection, yielding the 30S pre-initiation complex (PIC). Upon addition of the 50S ribosomal subunit IF-1, IF-2 and IF-3 are released leaving the mature 70S translation initiation complex. The polypeptide is Translation initiation factor IF-1 (Chlamydia pneumoniae (Chlamydophila pneumoniae)).